The sequence spans 37 residues: Large ribosomal subunit protein bL36 (37 aa).

It belongs to the bacterial ribosomal protein bL36 family.

The sequence is that of Large ribosomal subunit protein bL36 from Nitratidesulfovibrio vulgaris (strain DSM 19637 / Miyazaki F) (Desulfovibrio vulgaris).